The chain runs to 224 residues: LexA repressor (224 aa).

The segment at residues 31-51 is a DNA-binding region (H-T-H motif); sequence RAEIAAELGFKSANAAEEHLQ. Catalysis depends on for autocatalytic cleavage activity residues Ser-142 and Lys-179.

This sequence belongs to the peptidase S24 family. In terms of assembly, homodimer.

It catalyses the reaction Hydrolysis of Ala-|-Gly bond in repressor LexA.. Functionally, represses a number of genes involved in the response to DNA damage (SOS response), including recA and lexA. In the presence of single-stranded DNA, RecA interacts with LexA causing an autocatalytic cleavage which disrupts the DNA-binding part of LexA, leading to derepression of the SOS regulon and eventually DNA repair. This Acidovorax ebreus (strain TPSY) (Diaphorobacter sp. (strain TPSY)) protein is LexA repressor.